The sequence spans 1456 residues: Macrophage mannose receptor 1 (1456 aa).

An N-terminal signal peptide occupies residues 1 to 18; sequence MRLPLLLVFASVIPGAVL. The Extracellular segment spans residues 19–1389; that stretch reads LLDTRQFLIY…DPSKPSSNVA (1371 aa). A Ricin B-type lectin domain is found at 22-142; sequence TRQFLIYNED…SGLWSRWKIY (121 aa). Disulfide bonds link cysteine 35–cysteine 49 and cysteine 74–cysteine 91. A glycan (N-linked (GlcNAc...) asparagine) is linked at asparagine 104. The region spanning 163–211 is the Fibronectin type-II domain; sequence ANGATCAFPFKFENKWYADCTSAGRSDGWLWCGTTTDYDTDKLFGYCPL. Intrachain disulfides connect cysteine 168/cysteine 194, cysteine 182/cysteine 209, cysteine 247/cysteine 340, and cysteine 316/cysteine 332. Positions 225–341 constitute a C-type lectin 1 domain; the sequence is LTSVSYQINS…CVQKLGYICK (117 aa). N-linked (GlcNAc...) asparagine glycosylation is present at asparagine 344. 4 C-type lectin domains span residues 369-487, 511-626, 655-778, and 807-923; these read YAGH…YICK, HHFY…FVCK, RTSL…WICQ, and YKDY…FICQ. Intrachain disulfides connect cysteine 391–cysteine 486 and cysteine 463–cysteine 478. An N-linked (GlcNAc...) asparagine glycan is attached at asparagine 529. 7 cysteine pairs are disulfide-bonded: cysteine 532/cysteine 625, cysteine 600/cysteine 617, cysteine 646/cysteine 659, cysteine 680/cysteine 777, cysteine 753/cysteine 769, cysteine 828/cysteine 922, and cysteine 899/cysteine 914. Residues asparagine 926 and asparagine 930 are each glycosylated (N-linked (GlcNAc...) asparagine). C-type lectin domains follow at residues 952-1080, 1102-1213, and 1241-1356; these read YSNK…YICQ, YGKS…FLCK, and FHGH…YICK. 6 disulfide bridges follow: cysteine 977-cysteine 1079, cysteine 1052-cysteine 1071, cysteine 1123-cysteine 1212, cysteine 1190-cysteine 1204, cysteine 1263-cysteine 1355, and cysteine 1332-cysteine 1347. Asparagine 1160 carries N-linked (GlcNAc...) asparagine glycosylation. Asparagine 1205 carries N-linked (GlcNAc...) asparagine glycosylation. The helical transmembrane segment at 1390-1410 threads the bilayer; it reads GVVIIVILLILTGAGLAAYFF. The Cytoplasmic portion of the chain corresponds to 1411–1456; it reads YKKRRVHLPQEGAFENTLYFNSQSSPGTSDMKDLVGNIEQNEHSVI.

As to quaternary structure, (Microbial infection) Interacts with Dengue virus. In terms of assembly, (Microbial infection) May act as a receptor for hepatitis B virus, enabling uptake of the virus in hepatic dendritic cells.

The protein localises to the endosome membrane. It localises to the cell membrane. Functionally, mediates the endocytosis of glycoproteins by macrophages. Binds both sulfated and non-sulfated polysaccharide chains. Its function is as follows. (Microbial infection) Acts as a phagocytic receptor for bacteria, fungi and other pathogens. In terms of biological role, (Microbial infection) Acts as a receptor for Dengue virus envelope protein E. (Microbial infection) Interacts with Hepatitis B virus envelope protein. The polypeptide is Macrophage mannose receptor 1 (MRC1) (Homo sapiens (Human)).